We begin with the raw amino-acid sequence, 364 residues long: Aminomethyltransferase (364 aa).

The protein belongs to the GcvT family. As to quaternary structure, the glycine cleavage system is composed of four proteins: P, T, L and H.

The catalysed reaction is N(6)-[(R)-S(8)-aminomethyldihydrolipoyl]-L-lysyl-[protein] + (6S)-5,6,7,8-tetrahydrofolate = N(6)-[(R)-dihydrolipoyl]-L-lysyl-[protein] + (6R)-5,10-methylene-5,6,7,8-tetrahydrofolate + NH4(+). Its function is as follows. The glycine cleavage system catalyzes the degradation of glycine. The protein is Aminomethyltransferase of Shewanella baltica (strain OS155 / ATCC BAA-1091).